A 79-amino-acid chain; its full sequence is Small ribosomal subunit protein bS16 (79 aa).

Belongs to the bacterial ribosomal protein bS16 family.

In Nitratidesulfovibrio vulgaris (strain DSM 19637 / Miyazaki F) (Desulfovibrio vulgaris), this protein is Small ribosomal subunit protein bS16.